A 551-amino-acid polypeptide reads, in one-letter code: MELPAVGEHVFAVESIEKKRIRKGRVEYLVKWRGWSPKYNTWEPEENILDPRLLIAFQNRERQEQLMGYRKRGPKPKPLVVQVPTFARRSNVLTGLQDSSADNRAKLELGTQGKGQGHQYELNSKKHHQYQPHSKERSGKPPPPGKSGKYYYQLNSKKHHPYQPDPKMYDLQYQGGHKEAPSPTCPDLGTKSHPPDKWAHGAAAKGYLGAVKPLGGGAGAPGKGSEKGPPNGMTPAPKEAVTGNGIGGKMKIVKNKNKNGRIVIVMSKYMENGMQAVKIKSGEAAEGEARSPSHKKRAAEERHPQGDRTFKKAAGASEEKKAEVPCKRREEEALVSGDAQPQDLGSRKLSPTKEAFGEQPLQLTTKPDLLAWDPARSSHPPAHHHHHHHHHHHHHTVGLNLSHARKRCLSETHGEREPCKKRLTARSISTPTCLGGSPVSEHPANVSPTAASLPQPEVILLDSDLDEPIDLRCVKMRSDAGEPPSTLQVKPEAPAVAAVVAPAPASEKPPAEAQEEPVEPLSEFKPFFGNIIITDVTANCLTVTFKEYVTV.

In terms of domain architecture, Chromo spans 11–69 (FAVESIEKKRIRKGRVEYLVKWRGWSPKYNTWEPEENILDPRLLIAFQNRERQEQLMGY). Glycyl lysine isopeptide (Lys-Gly) (interchain with G-Cter in SUMO2) cross-links involve residues K77, K106, K114, and K125. The disordered stretch occupies residues 125–152 (KKHHQYQPHSKERSGKPPPPGKSGKYYY). K149 carries the post-translational modification N6-acetyllysine; alternate. Residue K149 forms a Glycyl lysine isopeptide (Lys-Gly) (interchain with G-Cter in SUMO2); alternate linkage. Glycyl lysine isopeptide (Lys-Gly) (interchain with G-Cter in SUMO2) cross-links involve residues K157, K167, and K178. The segment at 172-193 (QYQGGHKEAPSPTCPDLGTKSH) is disordered. S182 is modified (phosphoserine). Residues K191, K205, K212, K223, K249, K268, K278, and K280 each participate in a glycyl lysine isopeptide (Lys-Gly) (interchain with G-Cter in SUMO2) cross-link. Residues 216 to 244 (GGAGAPGKGSEKGPPNGMTPAPKEAVTGN) form a disordered region. Basic and acidic residues-rich tracts occupy residues 281–291 (SGEAAEGEARS), 298–310 (AAEE…DRTF), and 317–332 (SEEK…REEE). Disordered regions lie at residues 281 to 399 (SGEA…TVGL) and 430 to 451 (TPTC…PTAA). Residues K321, K353, and K366 each participate in a glycyl lysine isopeptide (Lys-Gly) (interchain with G-Cter in SUMO2) cross-link. The span at 381 to 396 (PAHHHHHHHHHHHHHT) shows a compositional bias: basic residues. S463 bears the Phosphoserine mark. K490 participates in a covalent cross-link: Glycyl lysine isopeptide (Lys-Gly) (interchain with G-Cter in SUMO2); alternate. Residue K490 forms a Glycyl lysine isopeptide (Lys-Gly) (interchain with G-Cter in SUMO); alternate linkage.

Interacts with SUV39H1 and HIPK2. Interacts with CSNK2B. Component of a PRC1-like complex. The composition of the PRC1 complex differs between the PRC1 complex in pluripotent embryonic stem cells containing RNF2, CBX7 and PCGF2, and the PRC1 complex in differentiating cells containing RNF2, CBX2, CBX4 and BMI1. Interacts with RNF2. Interacts (via chromodomain) with histone H3K9Me3 and single-stranded RNA (ssRNA). Interacts with CHTOP. May interact with H3C15 and H3C1. Interacts with PRDM1. In terms of processing, ubiquitinated. Ubiquitination regulates the function of the Polycomb group (PcG) multiprotein PRC1-like complex. Deubiquitinated by USP26. As to expression, expressed in embryoid bodies.

It is found in the nucleus. It localises to the nucleus speckle. Its pathway is protein modification; protein sumoylation. E3 SUMO-protein ligase that catalyzes sumoylation of target proteins by promoting the transfer of SUMO from the E2 enzyme to the substrate. Involved in the sumoylation of HNRNPK, a p53/TP53 transcriptional coactivator, hence indirectly regulates p53/TP53 transcriptional activation resulting in p21/CDKN1A expression. Functionally, component of a Polycomb group (PcG) multiprotein PRC1-like complex, a complex class required to maintain the transcriptionally repressive state of many genes, including Hox genes, throughout development. PcG PRC1 complex acts via chromatin remodeling and modification of histones; it mediates monoubiquitination of histone H2A 'Lys-119', rendering chromatin heritably changed in its expressibility. Binds to histone H3 trimethylated at 'Lys-9' (H3K9me3). Plays a role in the lineage differentiation of the germ layers in embryonic development. The polypeptide is E3 SUMO-protein ligase CBX4 (Cbx4) (Mus musculus (Mouse)).